The following is a 275-amino-acid chain: Phosphonoacetaldehyde hydrolase (275 aa).

Asp-15 acts as the Nucleophile in catalysis. Residues Asp-15 and Ala-17 each contribute to the Mg(2+) site. The active-site Schiff-base intermediate with substrate is the Lys-56. Mg(2+) is bound at residue Asp-189.

It belongs to the HAD-like hydrolase superfamily. PhnX family. In terms of assembly, homodimer. Mg(2+) serves as cofactor.

It carries out the reaction phosphonoacetaldehyde + H2O = acetaldehyde + phosphate + H(+). In terms of biological role, involved in phosphonate degradation. This Pseudomonas paraeruginosa (strain DSM 24068 / PA7) (Pseudomonas aeruginosa (strain PA7)) protein is Phosphonoacetaldehyde hydrolase.